The following is an 86-amino-acid chain: MKSIVFVALFGLALLAVVCSASEGAHKELLKEVVRAMVVDKTDAVQAEERECRWYLGGCSQDGDCCKHLQRHSNYEWCIWDGTFSK.

Positions 1 to 21 (MKSIVFVALFGLALLAVVCSA) are cleaved as a signal peptide. A propeptide spanning residues 22 to 50 (SEGAHKELLKEVVRAMVVDKTDAVQAEER) is cleaved from the precursor. 2 cysteine pairs are disulfide-bonded: cysteine 52–cysteine 66 and cysteine 65–cysteine 78.

Belongs to the neurotoxin 10 (Hwtx-1) family. 17 (Hntx-9) subfamily. As to expression, expressed by the venom gland.

The protein localises to the secreted. In terms of biological role, ion channel inhibitor. This Cyriopagopus hainanus (Chinese bird spider) protein is Omega-theraphotoxin-Hhn1e.